The chain runs to 840 residues: Exocyst complex component 7 (840 aa).

The tract at residues 1–112 (MSAPPRLSAR…ATSTTSPFSY (112 aa)) is disordered. The span at 19-31 (SNAPSPTSPTGLK) shows a compositional bias: polar residues. 2 stretches are compositionally biased toward low complexity: residues 50–73 (KSSV…TLPK) and 83–111 (QQQQ…SPFS). A coiled-coil region spans residues 193–227 (KNNATSELTEQDDQLENDKRDLQFIKEQLEKNNSM). The segment at 601–638 (QDNNNSNSNSNAPSSTSSNSKSSSSSSSSSSSNSASST) is disordered. The segment covering 603-637 (NNNSNSNSNAPSSTSSNSKSSSSSSSSSSSNSASS) has biased composition (low complexity).

It belongs to the EXO70 family. The exocyst complex is composed of sec3/exoc1, sec5/exoc2, sec6/exoc3, sec8/exoc4, sec10/exoc5, sec15/exoc6, exo70/exoc7 and exo84/exoc8.

The protein resides in the cytoplasm. It localises to the cytosol. It is found in the cell membrane. The protein localises to the midbody. Its subcellular location is the midbody ring. Its function is as follows. Component of the exocyst complex involved in the docking of exocytic vesicles with fusion sites on the plasma membrane. The chain is Exocyst complex component 7 (exoc7) from Dictyostelium discoideum (Social amoeba).